A 242-amino-acid chain; its full sequence is MDLYYGSYRALRSISLEIPANRVTALIGPSGCGKSSFLRCLNRMNDLIPGARVEGTITLDGADIYAPGVDVVALRRRVGMVFQRPNPFPMSIYDNVAYGPRIHGERRKAVLDEIVEQSLRGAALWDEVKDRLHRSALGLSGGQQQRLCIARSLAVKPEVLLMDEPASALDPISTAKIEELIRELRAQYSIVIVTHNMQQAARISDYTAFFLSGELIEHGPTGTIFTNPKDQRTEDYITGRFG.

An ABC transporter domain is found at 1–237 (MDLYYGSYRA…PKDQRTEDYI (237 aa)). 28–35 (GPSGCGKS) contributes to the ATP binding site.

This sequence belongs to the ABC transporter superfamily. Phosphate importer (TC 3.A.1.7) family. In terms of assembly, the complex is composed of two ATP-binding proteins (PstB), two transmembrane proteins (PstC and PstA) and a solute-binding protein (PstS).

It is found in the cell membrane. It catalyses the reaction phosphate(out) + ATP + H2O = ADP + 2 phosphate(in) + H(+). In terms of biological role, part of the ABC transporter complex PstSACB involved in phosphate import. Responsible for energy coupling to the transport system. This Symbiobacterium thermophilum (strain DSM 24528 / JCM 14929 / IAM 14863 / T) protein is Phosphate import ATP-binding protein PstB 1.